The following is a 201-amino-acid chain: Ras-related protein Rab-9B (201 aa).

GTP-binding residues include Val-18, Gly-19, Lys-20, Ser-21, Ser-22, Asp-33, Ser-34, Ala-36, His-38, and Thr-39. Ser-21 lines the Mg(2+) pocket. The short motif at 31–42 (KFDSQAFHTIGV) is the Switch 1 element. Ser-34 carries the post-translational modification Phosphoserine. Residues Thr-39 and Asp-62 each contribute to the Mg(2+) site. The short motif at 64-78 (AGQERFKSLRTPFYR) is the Switch 2 element. Residues Gly-65, Asn-124, Lys-125, Ala-155, and Lys-156 each contribute to the GTP site. S-geranylgeranyl cysteine attachment occurs at residues Cys-200 and Cys-201.

Belongs to the small GTPase superfamily. Rab family. In terms of assembly, interacts (GTP-bound form) with SGSM1; the GDP-bound form has much lower affinity for SGSM1. The GTP-bound form but not the GDP-bound form interacts with HPS4 and the BLOC-3 complex (heterodimer of HPS1 and HPS4) but does not interact with HPS1 alone. Interacts (GTP-bound form) with NDE1. The cofactor is Mg(2+).

The protein localises to the cell membrane. The protein resides in the cytoplasmic vesicle. It localises to the phagosome membrane. It catalyses the reaction GTP + H2O = GDP + phosphate + H(+). With respect to regulation, regulated by guanine nucleotide exchange factors (GEFs) which promote the exchange of bound GDP for free GTP. Regulated by GTPase activating proteins (GAPs) which increase the GTP hydrolysis activity. Inhibited by GDP dissociation inhibitors (GDIs). Functionally, the small GTPases Rab are key regulators of intracellular membrane trafficking, from the formation of transport vesicles to their fusion with membranes. Rabs cycle between an inactive GDP-bound form and an active GTP-bound form that is able to recruit to membranes different sets of downstream effectors directly responsible for vesicle formation, movement, tethering and fusion. RAB9B is involved in the transport of proteins between the endosomes and the trans Golgi network. May use NDE1/NDEL1 as an effector to interact with the dynein motor complex in order to control retrograde trafficking of RAB9-associated late endosomes to the TGN. The sequence is that of Ras-related protein Rab-9B from Mus musculus (Mouse).